The following is a 414-amino-acid chain: Gamma-glutamyl phosphate reductase (414 aa).

Belongs to the gamma-glutamyl phosphate reductase family.

Its subcellular location is the cytoplasm. The catalysed reaction is L-glutamate 5-semialdehyde + phosphate + NADP(+) = L-glutamyl 5-phosphate + NADPH + H(+). It functions in the pathway amino-acid biosynthesis; L-proline biosynthesis; L-glutamate 5-semialdehyde from L-glutamate: step 2/2. In terms of biological role, catalyzes the NADPH-dependent reduction of L-glutamate 5-phosphate into L-glutamate 5-semialdehyde and phosphate. The product spontaneously undergoes cyclization to form 1-pyrroline-5-carboxylate. This chain is Gamma-glutamyl phosphate reductase, found in Thermoanaerobacter sp. (strain X514).